Reading from the N-terminus, the 201-residue chain is Recombination protein RecR (201 aa).

The C4-type zinc-finger motif lies at 55–70 (CVCCGAFCEGRTCALC). The 96-residue stretch at 78 to 173 (GIICVVERAQ…IVTRLASGIP (96 aa)) folds into the Toprim domain.

The protein belongs to the RecR family.

May play a role in DNA repair. It seems to be involved in an RecBC-independent recombinational process of DNA repair. It may act with RecF and RecO. This Treponema pallidum (strain Nichols) protein is Recombination protein RecR.